The following is a 179-amino-acid chain: MSLKDRFDRFIDYFTEDEDSTVPYEKGNEPVFTPVNSSQEPDLPMNQPSQSAGAKDSNITRLHARQQELANQSQRSTDKVIIDVRYPRKYEDATEIVDLLAGNESILIDFQYMTEVQARRCLDYLDGACHVLAGNLKKVASTMYLLTPVNVIVNVEDIRLPDEEQNGEFGFDMKRNRVR.

Residues 18 to 57 (EDSTVPYEKGNEPVFTPVNSSQEPDLPMNQPSQSAGAKDS) are disordered. The span at 34-57 (PVNSSQEPDLPMNQPSQSAGAKDS) shows a compositional bias: polar residues.

Belongs to the SepF family. As to quaternary structure, homodimer. Interacts with FtsZ.

The protein resides in the cytoplasm. Its function is as follows. Cell division protein that is part of the divisome complex and is recruited early to the Z-ring. Probably stimulates Z-ring formation, perhaps through the cross-linking of FtsZ protofilaments. Its function overlaps with FtsA. The sequence is that of Cell division protein SepF from Streptococcus pneumoniae (strain Hungary19A-6).